We begin with the raw amino-acid sequence, 248 residues long: Probable transcriptional regulatory protein Atu3727 (248 aa).

Positions 1-21 are disordered; the sequence is MAGHSQFKNIMHRKGKQDSVR.

This sequence belongs to the TACO1 family.

The protein resides in the cytoplasm. In Agrobacterium fabrum (strain C58 / ATCC 33970) (Agrobacterium tumefaciens (strain C58)), this protein is Probable transcriptional regulatory protein Atu3727.